The chain runs to 186 residues: Inner membrane-spanning protein YciB (186 aa).

Helical transmembrane passes span 10–30 (IILF…AVAI), 47–67 (VEPL…ATLL), 76–96 (WKPT…QLVF), 121–141 (WGWT…AYNF), and 149–169 (FKLF…ALYL).

It belongs to the YciB family.

Its subcellular location is the cell inner membrane. Functionally, plays a role in cell envelope biogenesis, maintenance of cell envelope integrity and membrane homeostasis. The chain is Inner membrane-spanning protein YciB from Acidovorax sp. (strain JS42).